The following is a 47-amino-acid chain: Delta-actitoxin-Axm1g (47 aa).

3 disulfide bridges follow: cysteine 4–cysteine 44, cysteine 6–cysteine 34, and cysteine 27–cysteine 45.

Belongs to the sea anemone sodium channel inhibitory toxin family. Type I subfamily.

Its subcellular location is the secreted. It localises to the nematocyst. The protein is Delta-actitoxin-Axm1g of Anthopleura xanthogrammica (Giant green sea anemone).